We begin with the raw amino-acid sequence, 459 residues long: WPP domain-interacting protein 3 (459 aa).

The span at 1–17 (MNESVPDSVEDNGNSVP) shows a compositional bias: polar residues. Residues 1–78 (MNESVPDSVE…GPVRDEAAPV (78 aa)) form a disordered region. The span at 52 to 66 (STRKGFGLKKWRRIK) shows a compositional bias: basic residues. 2 consecutive short sequence motifs (nuclear localization signal) follow at residues 60 to 61 (KK) and 63 to 64 (RR). Residues 67-78 (RDGPVRDEAAPV) are compositionally biased toward basic and acidic residues. Residues 86–87 (KR) carry the Nuclear localization signal 3 motif. 2 disordered regions span residues 240 to 266 (KEEV…NNNH) and 308 to 330 (TDEL…TSSG). Residues 251–266 (NGNKEDDGESKKNNNH) are compositionally biased toward basic and acidic residues. Positions 308-319 (TDELSSDQPSHQ) are enriched in polar residues. Residues 331–375 (SKALILKEKVKLLEHKLEEARAALEAKEARIQELENSKIESELEC) adopt a coiled-coil conformation. The region spanning 426–459 (KLGFYILTQLILLVSILRFLVLQFSPASRLVIPT) is the KASH domain. A helical transmembrane segment spans residues 427 to 447 (LGFYILTQLILLVSILRFLVL).

Component of Ran complexes at least composed of WIT1 or WIT2, RANGAP1 or RANGAP2, and WIP1 or WIP2 or WIP3. Interacts with RANGAP1, WPP1/MAF1, and WPP2/MAF2. Interacts with SUN1 and SUN2. Core component of the LINC complex which is composed of inner nuclear membrane SUN domain-containing proteins coupled to outer nuclear membrane WIP and WIT proteins. The LINC complex also involves nucleoskeletal proteins CRWN/LINC and possibly KAKU4 and the cytoskeletal myosin KAKU1. Interacts with WIT2. Expressed in seedlings, roots, stems, leaves, and flowers.

The protein localises to the nucleus envelope. It is found in the nucleus membrane. In terms of biological role, mediates and enhances the nuclear envelope docking of RANGAP proteins mediated by WIT1 and WIT2 in the undifferentiated cells of root tips. As component of the SUN-WIP-WIT2-KAKU1 complex, mediates the transfer of cytoplasmic forces to the nuclear envelope (NE), leading to nuclear shape changes. This Arabidopsis thaliana (Mouse-ear cress) protein is WPP domain-interacting protein 3 (WIP3).